The sequence spans 661 residues: UvrABC system protein B (661 aa).

The 390-residue stretch at 25 to 414 (AGLNSKKRSQ…DTVVELIIRP (390 aa)) folds into the Helicase ATP-binding domain. Position 38–45 (38–45 (GITGSGKT)) interacts with ATP. Positions 91-114 (YYDYYQPEAYIARTDTFIEKDSSI) match the Beta-hairpin motif. Positions 430–592 (QVEDLIGEIQ…IIPKTINRAI (163 aa)) constitute a Helicase C-terminal domain. The 36-residue stretch at 621–656 (KAHIEKLKKDMLKAASNLEFEQAAKLRDQLKTLEEA) folds into the UVR domain.

This sequence belongs to the UvrB family. In terms of assembly, forms a heterotetramer with UvrA during the search for lesions. Interacts with UvrC in an incision complex.

The protein resides in the cytoplasm. Its function is as follows. The UvrABC repair system catalyzes the recognition and processing of DNA lesions. A damage recognition complex composed of 2 UvrA and 2 UvrB subunits scans DNA for abnormalities. Upon binding of the UvrA(2)B(2) complex to a putative damaged site, the DNA wraps around one UvrB monomer. DNA wrap is dependent on ATP binding by UvrB and probably causes local melting of the DNA helix, facilitating insertion of UvrB beta-hairpin between the DNA strands. Then UvrB probes one DNA strand for the presence of a lesion. If a lesion is found the UvrA subunits dissociate and the UvrB-DNA preincision complex is formed. This complex is subsequently bound by UvrC and the second UvrB is released. If no lesion is found, the DNA wraps around the other UvrB subunit that will check the other stand for damage. In Rickettsia felis (strain ATCC VR-1525 / URRWXCal2) (Rickettsia azadi), this protein is UvrABC system protein B.